A 624-amino-acid polypeptide reads, in one-letter code: Ubiquitin-associated and SH3 domain-containing protein A (624 aa).

A UBA domain is found at 19–60 (RSTPSLLDPLLAMGFPTHTALKALAATGRKTAEAAADWLHGH). The SH3 domain occupies 238–303 (VHYQTLKALF…PENYTERANE (66 aa)). The interval 358–624 (RRGILVVRHG…FNWRNWISSN (267 aa)) is phosphatase-like.

In terms of assembly, homodimer or homooligomer. Interacts with CBL. Part of a complex containing CBL and activated EGFR. Interacts with ubiquitin and with mono-ubiquitinated proteins. Interacts with dynamin.

The protein localises to the cytoplasm. It localises to the nucleus. Interferes with CBL-mediated down-regulation and degradation of receptor-type tyrosine kinases. Promotes accumulation of activated target receptors, such as T-cell receptors, EGFR and PDGFRB, on the cell surface. May inhibit dynamin-dependent endocytic pathways by functionally sequestering dynamin via its SH3 domain. Exhibits negligible protein tyrosine phosphatase activity at neutral pH. May act as a dominant-negative regulator of UBASH3B-dependent dephosphorylation. This chain is Ubiquitin-associated and SH3 domain-containing protein A (Ubash3a), found in Mus musculus (Mouse).